Here is a 179-residue protein sequence, read N- to C-terminus: Coiled-coil domain-containing protein 32 (179 aa).

Positions 75-98 form a coiled coil; the sequence is EVYLASLEKKLRRIKGLNEEVTSK. The segment at 157-179 is disordered; it reads FLIPPESQAEKPEARDEPAAAEQ. The span at 164 to 179 shows a compositional bias: basic and acidic residues; it reads QAEKPEARDEPAAAEQ.

In terms of assembly, interacts with AP2S1; the interaction is direct and mediates association with adaptor protein complex 2 (AP-2).

It is found in the membrane. Its subcellular location is the coated pit. Functionally, regulates clathrin-mediated endocytsois of cargos such as transferrin probably through the association and modulation of adaptor protein complex 2 (AP-2). Has a role in ciliogenesis. Required for proper cephalic and left/right axis development. In Rattus norvegicus (Rat), this protein is Coiled-coil domain-containing protein 32 (Ccdc32).